A 454-amino-acid polypeptide reads, in one-letter code: tRNA modification GTPase MnmE (454 aa).

(6S)-5-formyl-5,6,7,8-tetrahydrofolate is bound by residues Arg23, Glu80, and Lys120. Residues 216 to 377 form the TrmE-type G domain; the sequence is GMKVVIAGRP…LRNHLKQSMG (162 aa). Asn226 provides a ligand contact to K(+). GTP-binding positions include 226-231, 245-251, 270-273, 335-338, and 358-360; these read NAGKSS, TDIAGTT, DTAG, NKAD, and SAR. A Mg(2+)-binding site is contributed by Ser230. K(+) contacts are provided by Thr245, Ile247, and Thr250. Thr251 serves as a coordination point for Mg(2+). Lys454 provides a ligand contact to (6S)-5-formyl-5,6,7,8-tetrahydrofolate.

Belongs to the TRAFAC class TrmE-Era-EngA-EngB-Septin-like GTPase superfamily. TrmE GTPase family. In terms of assembly, homodimer. Heterotetramer of two MnmE and two MnmG subunits. K(+) serves as cofactor.

The protein localises to the cytoplasm. In terms of biological role, exhibits a very high intrinsic GTPase hydrolysis rate. Involved in the addition of a carboxymethylaminomethyl (cmnm) group at the wobble position (U34) of certain tRNAs, forming tRNA-cmnm(5)s(2)U34. This chain is tRNA modification GTPase MnmE, found in Escherichia coli O17:K52:H18 (strain UMN026 / ExPEC).